The chain runs to 166 residues: NAD(P)H-quinone oxidoreductase subunit I, chloroplastic (166 aa).

4Fe-4S ferredoxin-type domains follow at residues 55-84 (GRIHFEFDKCIACEVCVRVCPIDLPVVDWK) and 95-124 (LNYSIDFGICIFCGNCVEYCPTNCLSMTEE). [4Fe-4S] cluster is bound by residues cysteine 64, cysteine 67, cysteine 70, cysteine 74, cysteine 104, cysteine 107, cysteine 110, and cysteine 114.

The protein belongs to the complex I 23 kDa subunit family. In terms of assembly, NDH is composed of at least 16 different subunits, 5 of which are encoded in the nucleus. It depends on [4Fe-4S] cluster as a cofactor.

It is found in the plastid. The protein resides in the chloroplast thylakoid membrane. It carries out the reaction a plastoquinone + NADH + (n+1) H(+)(in) = a plastoquinol + NAD(+) + n H(+)(out). The catalysed reaction is a plastoquinone + NADPH + (n+1) H(+)(in) = a plastoquinol + NADP(+) + n H(+)(out). Its function is as follows. NDH shuttles electrons from NAD(P)H:plastoquinone, via FMN and iron-sulfur (Fe-S) centers, to quinones in the photosynthetic chain and possibly in a chloroplast respiratory chain. The immediate electron acceptor for the enzyme in this species is believed to be plastoquinone. Couples the redox reaction to proton translocation, and thus conserves the redox energy in a proton gradient. This chain is NAD(P)H-quinone oxidoreductase subunit I, chloroplastic, found in Ambrosia trifida (Giant ragweed).